The primary structure comprises 93 residues: MRFLLGLQYFASKKGVGSTKNGRDSESKRLGAKKSDGQFTNAGSIIYRQRGTKIHPGLNVGRGGDDTLFALISGIVKYEKFGKNRTRVSVIPN.

A propeptide spanning residues 1-10 is cleaved from the precursor; it reads MRFLLGLQYF. The tract at residues 14–36 is disordered; that stretch reads KGVGSTKNGRDSESKRLGAKKSD. Basic and acidic residues predominate over residues 21–36; it reads NGRDSESKRLGAKKSD.

This sequence belongs to the bacterial ribosomal protein bL27 family. Post-translationally, the N-terminus is cleaved by ribosomal processing cysteine protease Prp.

This chain is Large ribosomal subunit protein bL27, found in Mycoplasma capricolum subsp. capricolum (strain California kid / ATCC 27343 / NCTC 10154).